Here is a 131-residue protein sequence, read N- to C-terminus: UPF0102 protein H16_A3579 (131 aa).

Belongs to the UPF0102 family.

The chain is UPF0102 protein H16_A3579 from Cupriavidus necator (strain ATCC 17699 / DSM 428 / KCTC 22496 / NCIMB 10442 / H16 / Stanier 337) (Ralstonia eutropha).